A 147-amino-acid chain; its full sequence is MNTIHLRCLFRMNPLVWCLRADVAAELRSLRRYYHLSNGMESKSVDTRSIYRELGATLSYNMRLGNGMEXEPWLKAAVRKEFVDDNRVKVNNDGNFVNDLSGRRGIYQAAIKASFSSTFSGHLGVGYSHGAGVESPWNAVAGVNWSF.

This is an uncharacterized protein from Escherichia coli (strain K12).